The sequence spans 403 residues: tRNA methyltransferase 10 homolog C (403 aa).

The N-terminal 39 residues, 1-39 (MAAFLKMSVSVNFFRPFTRFLVPFTLHRKRNNLTILQRY), are a transit peptide targeting the mitochondrion. S84 carries the post-translational modification Phosphoserine. Residues 138–169 (TKEKVKKARQIKKEMKAAAREEAKNIKLLETT) adopt a coiled-coil conformation. The SAM-dependent MTase TRM10-type domain occupies 191–383 (MGWKGAQAMQ…QFVPKRKHTG (193 aa)).

It belongs to the class IV-like SAM-binding methyltransferase superfamily. TRM10 family. In terms of assembly, component of mitochondrial ribonuclease P, a complex composed of TRMT10C/MRPP1, HSD17B10/MRPP2 and PRORP/MRPP3. Interacts with HSD17B10/MRPP2; forming the MRPP1-MRPP2 subcomplex of the mitochondrial ribonuclease P complex. Interacts with GRSF1.

It is found in the mitochondrion matrix. It localises to the mitochondrion nucleoid. The enzyme catalyses adenosine(9) in tRNA + S-adenosyl-L-methionine = N(1)-methyladenosine(9) in tRNA + S-adenosyl-L-homocysteine + H(+). It carries out the reaction guanosine(9) in tRNA + S-adenosyl-L-methionine = N(1)-methylguanosine(9) in tRNA + S-adenosyl-L-homocysteine + H(+). The catalysed reaction is an adenosine in mRNA + S-adenosyl-L-methionine = an N(1)-methyladenosine in mRNA + S-adenosyl-L-homocysteine + H(+). Functionally, mitochondrial tRNA N(1)-methyltransferase involved in mitochondrial tRNA maturation. Component of mitochondrial ribonuclease P, a complex composed of TRMT10C/MRPP1, HSD17B10/MRPP2 and PRORP/MRPP3, which cleaves tRNA molecules in their 5'-ends. Together with HSD17B10/MRPP2, forms a subcomplex of the mitochondrial ribonuclease P, named MRPP1-MRPP2 subcomplex, which displays functions that are independent of the ribonuclease P activity. The MRPP1-MRPP2 subcomplex catalyzes the formation of N(1)-methylguanine and N(1)-methyladenine at position 9 (m1G9 and m1A9, respectively) in tRNAs; TRMT10C/MRPP1 acting as the catalytic N(1)-methyltransferase subunit. The MRPP1-MRPP2 subcomplex also acts as a tRNA maturation platform: following 5'-end cleavage by the mitochondrial ribonuclease P complex, the MRPP1-MRPP2 subcomplex enhances the efficiency of 3'-processing catalyzed by ELAC2, retains the tRNA product after ELAC2 processing and presents the nascent tRNA to the mitochondrial CCA tRNA nucleotidyltransferase TRNT1 enzyme. In addition to tRNA N(1)-methyltransferase activity, TRMT10C/MRPP1 also acts as a mRNA N(1)-methyltransferase by mediating methylation of adenosine residues at the N(1) position of MT-ND5 mRNA. Associates with mitochondrial DNA complexes at the nucleoids to initiate RNA processing and ribosome assembly. This chain is tRNA methyltransferase 10 homolog C, found in Homo sapiens (Human).